A 298-amino-acid polypeptide reads, in one-letter code: Small ribosomal subunit biogenesis GTPase RsgA (298 aa).

In terms of domain architecture, CP-type G spans 67 to 228 (TNELVRPPIS…IADTPGFSSL (162 aa)). Residues 116 to 119 (TKMD) and 171 to 179 (GQSGVGKSS) each bind GTP. Zn(2+)-binding residues include C252, C257, H259, and C265.

Belongs to the TRAFAC class YlqF/YawG GTPase family. RsgA subfamily. As to quaternary structure, monomer. Associates with 30S ribosomal subunit, binds 16S rRNA. Requires Zn(2+) as cofactor.

Its subcellular location is the cytoplasm. Its function is as follows. One of several proteins that assist in the late maturation steps of the functional core of the 30S ribosomal subunit. Helps release RbfA from mature subunits. May play a role in the assembly of ribosomal proteins into the subunit. Circularly permuted GTPase that catalyzes slow GTP hydrolysis, GTPase activity is stimulated by the 30S ribosomal subunit. In Bacillus pumilus (strain SAFR-032), this protein is Small ribosomal subunit biogenesis GTPase RsgA.